The primary structure comprises 425 residues: Glutamyl-tRNA reductase (425 aa).

Substrate contacts are provided by residues 49-52 (TCNR), Ser-107, 112-114 (EPQ), and Gln-118. The Nucleophile role is filled by Cys-50. An NADP(+)-binding site is contributed by 187–192 (GAGETI).

This sequence belongs to the glutamyl-tRNA reductase family. Homodimer.

The enzyme catalyses (S)-4-amino-5-oxopentanoate + tRNA(Glu) + NADP(+) = L-glutamyl-tRNA(Glu) + NADPH + H(+). The protein operates within porphyrin-containing compound metabolism; protoporphyrin-IX biosynthesis; 5-aminolevulinate from L-glutamyl-tRNA(Glu): step 1/2. Its function is as follows. Catalyzes the NADPH-dependent reduction of glutamyl-tRNA(Glu) to glutamate 1-semialdehyde (GSA). The protein is Glutamyl-tRNA reductase of Pseudomonas putida (strain GB-1).